The following is a 632-amino-acid chain: Probable potassium transport system protein Kup (632 aa).

12 consecutive transmembrane segments (helical) span residues 20 to 40 (LLVA…LYTL), 60 to 80 (ILSL…VMFI), 111 to 131 (LMVI…MITP), 146 to 166 (FDGI…ALFL), 178 to 198 (LFGP…VHGI), 216 to 236 (FFIV…LALT), 257 to 277 (WFAL…AILL), 289 to 309 (LLAP…ATVI), 347 to 367 (IYIA…VIGF), 379 to 399 (VAVT…MLLL), 404 to 424 (PVLA…FFAA), and 429 to 449 (IVQG…LMST).

Belongs to the HAK/KUP transporter (TC 2.A.72) family.

Its subcellular location is the cell inner membrane. The enzyme catalyses K(+)(in) + H(+)(in) = K(+)(out) + H(+)(out). Functionally, transport of potassium into the cell. Likely operates as a K(+):H(+) symporter. This is Probable potassium transport system protein Kup from Pseudomonas putida (strain W619).